A 291-amino-acid polypeptide reads, in one-letter code: 3-hydroxy-5-phosphonooxypentane-2,4-dione thiolase (291 aa).

The active-site Schiff-base intermediate with substrate is the Lys203.

Belongs to the DeoC/FbaB aldolase family. In terms of assembly, homodecamer.

Its subcellular location is the cytoplasm. The enzyme catalyses dihydroxyacetone phosphate + acetyl-CoA = 3-hydroxy-2,4-dioxopentyl phosphate + CoA. In terms of biological role, involved in the degradation of phospho-AI-2, thereby terminating induction of the lsr operon and closing the AI-2 signaling cycle. Catalyzes the transfer of an acetyl moiety from 3-hydroxy-5-phosphonooxypentane-2,4-dione to CoA to form glycerone phosphate and acetyl-CoA. This is 3-hydroxy-5-phosphonooxypentane-2,4-dione thiolase from Salmonella typhimurium (strain LT2 / SGSC1412 / ATCC 700720).